A 497-amino-acid polypeptide reads, in one-letter code: MEQAAKATISLSPPSYAGCCMAACPYRSTRHLRRGGGCSARSISSLRHAPSARVYAAAAAAATPESKSTKENDLVFIAGATGKVGSRAVREFIKLGFRVRAGVRSAQRASSLVQSVEQLKVDDDATSPAERLEIVECDLEKQAQSDIVSAIGNAAIVVCSIGASEKDILDVTGPYRIDYMATNNLVQAATAAKVEHFILVTSLGTNRIGFPAFLLNLFWGVLCWKRRAEEALIGSGLPYTIVRPGGMERPTDAFKETHNLVVAVEDTYVGGLVSNLQVAELIACIASNRRTAYCKVVEAIAETTAPLLPTEDQLANIPSKRQPPPEPEVVQQGETPPKPIQQSQRPLSPYTAFVDLKPPSSPSPCPPSAAAPAPTSTDTAAAGSSSTLNSSATGTPISVDQPKQQQRPLSPYTRYEELKPPSSPSPTPPSAASSASVSASPDTPPAAAASSAALDSSANGTPITGDQLNQQQSPLSPYTRYEELKPPSSPTPSTPKL.

A chloroplast-targeting transit peptide spans 1–55 (MEQAAKATISLSPPSYAGCCMAACPYRSTRHLRRGGGCSARSISSLRHAPSARVY). 75 to 104 (VFIAGATGKVGSRAVREFIKLGFRVRAGVR) lines the NADP(+) pocket. Residues 310–497 (TEDQLANIPS…SSPTPSTPKL (188 aa)) form a disordered region. Repeat 1 spans residues 346–367 (PLSPYTAFVDLKPPSSPSPCPP). The interval 346–495 (PLSPYTAFVD…PPSSPTPSTP (150 aa)) is 3 X 22 AA approximate repeats. Residues 359 to 369 (PSSPSPCPPSA) are compositionally biased toward pro residues. Positions 370-387 (AAPAPTSTDTAAAGSSST) are enriched in low complexity. A compositionally biased stretch (polar residues) spans 388–408 (LNSSATGTPISVDQPKQQQRP). The stretch at 408 to 429 (PLSPYTRYEELKPPSSPSPTPP) is repeat 2. A compositionally biased stretch (low complexity) spans 430-458 (SAASSASVSASPDTPPAAAASSAALDSSA). The segment covering 459-476 (NGTPITGDQLNQQQSPLS) has biased composition (polar residues). Residues 474–495 (PLSPYTRYEELKPPSSPTPSTP) form repeat 3. A compositionally biased stretch (pro residues) spans 487–497 (PSSPTPSTPKL).

Part of the Tic complex. Interacts with TIC110 and TIC55. Interacts with LFNR1 and LFNR2. Component of high molecular weight thylakoid LFNRs-containing protein complexes containing LIR1, LFNR1, LFNR2, TIC62 and TROL proteins.

Its subcellular location is the plastid. The protein resides in the chloroplast inner membrane. It is found in the chloroplast stroma. It localises to the chloroplast thylakoid. Functionally, involved in protein precursor import into chloroplasts. Part of the redox regulon consisting of TIC32, TIC 55 and TIC62. Acts as a membrane anchor of LFNR1 and LFNR2. Has a NADPH-dependent dehydrogenase activity, but only after preincubation with lipids. This chain is Protein TIC 62, chloroplastic (TIC62), found in Oryza sativa subsp. japonica (Rice).